Reading from the N-terminus, the 297-residue chain is uncharacterized protein (297 aa).

E46 is a catalytic residue.

Belongs to the PhzF family. Homodimer and homotetramer.

This is an uncharacterized protein from Escherichia coli (strain K12).